We begin with the raw amino-acid sequence, 307 residues long: MAIPVIDFSKLNGEEREKTLSEIARACEEWGFFQLVNHGIPLELLNKVKKLSSDCYKTEREEAFKTSNPVKLLNELVQKNSGEKLENVDWEDVFTLLDHNQNEWPSNIKETMGEYREEVRKLASKMMEVMDENLGLPKGYIKKAFNEGMEDGEETAFFGTKVSHYPPCPHPELVNGLRAHTDAGGVVLLFQDDEYDGLQVLKDGEWIDVQPLPNAIVINTGDQIEVLSNGRYKSAWHRVLAREEGNRRSIASFYNPSYKAAIGPAAVAEEEGSEKKYPKFVFGDYMDVYANQKFMPKEPRFLAVKSL.

Positions 106–134 (SNIKETMGEYREEVRKLASKMMEVMDENL) form a coiled coil. One can recognise a Fe2OG dioxygenase domain in the interval 152–256 (GEETAFFGTK…RRSIASFYNP (105 aa)). Fe cation is bound by residues histidine 180, aspartate 182, and histidine 237. 2-oxoglutarate is bound at residue arginine 247.

This sequence belongs to the iron/ascorbate-dependent oxidoreductase family. Fe(2+) serves as cofactor.

The catalysed reaction is 1-aminocyclopropane-1-carboxylate + L-ascorbate + O2 = ethene + L-dehydroascorbate + hydrogen cyanide + CO2 + 2 H2O. The protein operates within alkene biosynthesis; ethylene biosynthesis via S-adenosyl-L-methionine; ethylene from S-adenosyl-L-methionine: step 2/2. Functionally, enzyme involved in the ethylene biosynthesis. The chain is 1-aminocyclopropane-1-carboxylate oxidase 5 from Arabidopsis thaliana (Mouse-ear cress).